Reading from the N-terminus, the 340-residue chain is DnaJ homolog subfamily B member 1 (340 aa).

The region spanning 2-70 (GKDYYQTLGL…REIFDRYGEE (69 aa)) is the J domain. Positions 68–90 (GEEGLKGSGPSGGSSGGTNGTSF) are disordered. Positions 73-86 (KGSGPSGGSSGGTN) are enriched in gly residues. Residue Thr-307 is modified to Phosphothreonine.

Interacts with DNAJC3. Interacts with HSF1 (via transactivation domain); this interaction results in the inhibition of heat shock- and HSF1-induced transcriptional activity during the attenuation and recovery phase period of the heat shock response. Interacts with BAG3.

Its subcellular location is the cytoplasm. The protein localises to the nucleus. The protein resides in the nucleolus. Interacts with HSP70 and can stimulate its ATPase activity. Stimulates the association between HSC70 and HIP. Negatively regulates heat shock-induced HSF1 transcriptional activity during the attenuation and recovery phase period of the heat shock response. Stimulates ATP hydrolysis and the folding of unfolded proteins mediated by HSPA1A/B (in vitro). This chain is DnaJ homolog subfamily B member 1 (DNAJB1), found in Bos taurus (Bovine).